Consider the following 565-residue polypeptide: Formate--tetrahydrofolate ligase (565 aa).

73-80 (TPAGEGKS) is a binding site for ATP.

It belongs to the formate--tetrahydrofolate ligase family.

It catalyses the reaction (6S)-5,6,7,8-tetrahydrofolate + formate + ATP = (6R)-10-formyltetrahydrofolate + ADP + phosphate. Its pathway is one-carbon metabolism; tetrahydrofolate interconversion. The polypeptide is Formate--tetrahydrofolate ligase (Arthrobacter sp. (strain FB24)).